A 300-amino-acid polypeptide reads, in one-letter code: Ribosomal protein bS6--L-glutamate ligase (300 aa).

The region spanning 104 to 287 (MQLLARQGID…IAGKMIRWIE (184 aa)) is the ATP-grasp domain. ATP is bound by residues lysine 141, 178–179 (EY), aspartate 187, and 211–213 (RSN). Residues aspartate 248, glutamate 260, and asparagine 262 each contribute to the Mg(2+) site. The Mn(2+) site is built by aspartate 248, glutamate 260, and asparagine 262.

This sequence belongs to the RimK family. Mg(2+) serves as cofactor. Mn(2+) is required as a cofactor.

An L-glutamate ligase that catalyzes the ATP-dependent post-translational addition of glutamate residues to the C-terminus of ribosomal protein bS6 (RpsF). Is also able to catalyze the synthesis of poly-alpha-glutamate in vitro, via ATP hydrolysis from unprotected glutamate as substrate. The number of glutamate residues added to either RpsF or to poly-alpha-glutamate changes with pH. The polypeptide is Ribosomal protein bS6--L-glutamate ligase (Shigella flexneri serotype 5b (strain 8401)).